A 598-amino-acid chain; its full sequence is Elongation factor 4 (598 aa).

The tr-type G domain maps to 2–184; sequence DHIRNFSIIA…AIVKRVPPPR (183 aa). GTP-binding positions include 14-19 and 131-134; these read DHGKST and NKID.

Belongs to the TRAFAC class translation factor GTPase superfamily. Classic translation factor GTPase family. LepA subfamily.

Its subcellular location is the cell inner membrane. The enzyme catalyses GTP + H2O = GDP + phosphate + H(+). Required for accurate and efficient protein synthesis under certain stress conditions. May act as a fidelity factor of the translation reaction, by catalyzing a one-codon backward translocation of tRNAs on improperly translocated ribosomes. Back-translocation proceeds from a post-translocation (POST) complex to a pre-translocation (PRE) complex, thus giving elongation factor G a second chance to translocate the tRNAs correctly. Binds to ribosomes in a GTP-dependent manner. The protein is Elongation factor 4 of Syntrophus aciditrophicus (strain SB).